We begin with the raw amino-acid sequence, 1127 residues long: DNA-directed RNA polymerase I subunit RPA2 homolog (1127 aa).

Ser1025 bears the Phosphoserine mark.

The protein belongs to the RNA polymerase beta chain family. As to quaternary structure, component of the RNA polymerase I (Pol I) complex consisting of at least 13 subunits.

It localises to the nucleus. The protein resides in the nucleolus. The enzyme catalyses RNA(n) + a ribonucleoside 5'-triphosphate = RNA(n+1) + diphosphate. Its activity is regulated as follows. Antisense ribosomal siRNAs silence rRNA expression during the elongation phase by decreasing rpoa-2 occupancy downstream of the RNAi-targeted region in nrde-2-dependent manner. Its function is as follows. DNA-dependent RNA polymerase catalyzes the transcription of DNA into RNA using the four ribonucleoside triphosphates as substrates. Second largest core component of RNA polymerase I which synthesizes ribosomal RNA precursors. Proposed to contribute to the polymerase catalytic activity and forms the polymerase active center together with the largest subunit. Pol I is composed of mobile elements and RPA2 is part of the core element with the central large cleft and probably a clamp element that moves to open and close the cleft. Specifically binds to 18S, 5.8S and 26S rDNA, but not to 5S rDNA. This chain is DNA-directed RNA polymerase I subunit RPA2 homolog, found in Caenorhabditis elegans.